The chain runs to 222 residues: Putative hemin import ATP-binding protein HrtA (222 aa).

The ABC transporter domain occupies 3-222 (LVVKDISKTF…QLYDGKIKNS (220 aa)). 39-46 (GASGSGKT) serves as a coordination point for ATP.

The protein belongs to the ABC transporter superfamily. HrtA family. In terms of assembly, the complex is composed of two ATP-binding proteins (HrtA), two transmembrane proteins (HrtB) and a solute-binding protein.

The protein localises to the cell membrane. In terms of biological role, part of the ABC transporter complex hrt involved in hemin import. Responsible for energy coupling to the transport system. The protein is Putative hemin import ATP-binding protein HrtA (hrtA) of Staphylococcus epidermidis (strain ATCC 35984 / DSM 28319 / BCRC 17069 / CCUG 31568 / BM 3577 / RP62A).